Reading from the N-terminus, the 316-residue chain is CRISPR-associated endonuclease Cas1 (316 aa).

Residues glutamate 143, histidine 206, and glutamate 221 each contribute to the Mn(2+) site.

Belongs to the CRISPR-associated endonuclease Cas1 family. As to quaternary structure, homodimer, forms a heterotetramer with a Cas2 homodimer. It depends on Mg(2+) as a cofactor. Requires Mn(2+) as cofactor.

CRISPR (clustered regularly interspaced short palindromic repeat), is an adaptive immune system that provides protection against mobile genetic elements (viruses, transposable elements and conjugative plasmids). CRISPR clusters contain spacers, sequences complementary to antecedent mobile elements, and target invading nucleic acids. CRISPR clusters are transcribed and processed into CRISPR RNA (crRNA). Acts as a dsDNA endonuclease. Involved in the integration of spacer DNA into the CRISPR cassette. The chain is CRISPR-associated endonuclease Cas1 from Aquifex aeolicus (strain VF5).